The sequence spans 684 residues: Glycine--tRNA ligase beta subunit (684 aa).

Belongs to the class-II aminoacyl-tRNA synthetase family. In terms of assembly, tetramer of two alpha and two beta subunits.

It is found in the cytoplasm. It catalyses the reaction tRNA(Gly) + glycine + ATP = glycyl-tRNA(Gly) + AMP + diphosphate. This Ectopseudomonas mendocina (strain ymp) (Pseudomonas mendocina) protein is Glycine--tRNA ligase beta subunit.